We begin with the raw amino-acid sequence, 92 residues long: Phosphoribosyl-ATP pyrophosphatase (92 aa).

The protein belongs to the PRA-PH family.

It localises to the cytoplasm. The catalysed reaction is 1-(5-phospho-beta-D-ribosyl)-ATP + H2O = 1-(5-phospho-beta-D-ribosyl)-5'-AMP + diphosphate + H(+). The protein operates within amino-acid biosynthesis; L-histidine biosynthesis; L-histidine from 5-phospho-alpha-D-ribose 1-diphosphate: step 2/9. This is Phosphoribosyl-ATP pyrophosphatase from Leptospira biflexa serovar Patoc (strain Patoc 1 / ATCC 23582 / Paris).